The sequence spans 46 residues: Esculentin-1GRa (46 aa).

Expressed by the skin glands.

Its subcellular location is the secreted. Antimicrobial peptide active against the Gram-positive bacterium S.aureus (MIC=12.5 uM) and against the Gram-negative bacterium E.coli (MIC=6 uM). Has no antifungal activity against C.albicans. Shows hemolytic activity against human erythrocytes only at high concentrations (LC(50)=210 uM). In Odorrana grahami (Yunnanfu frog), this protein is Esculentin-1GRa.